The sequence spans 425 residues: Trigger factor (425 aa).

Residues 163 to 248 (GDTAVIDFEG…IHEIKTKELP (86 aa)) form the PPIase FKBP-type domain.

Belongs to the FKBP-type PPIase family. Tig subfamily.

Its subcellular location is the cytoplasm. The catalysed reaction is [protein]-peptidylproline (omega=180) = [protein]-peptidylproline (omega=0). Functionally, involved in protein export. Acts as a chaperone by maintaining the newly synthesized protein in an open conformation. Functions as a peptidyl-prolyl cis-trans isomerase. The chain is Trigger factor from Bacillus cereus (strain G9842).